Consider the following 100-residue polypeptide: UPF0251 protein VV2_0946 (100 aa).

It belongs to the UPF0251 family.

The polypeptide is UPF0251 protein VV2_0946 (Vibrio vulnificus (strain CMCP6)).